Consider the following 207-residue polypeptide: Large ribosomal subunit protein uL3 (207 aa).

It belongs to the universal ribosomal protein uL3 family. As to quaternary structure, part of the 50S ribosomal subunit. Forms a cluster with proteins L14 and L19.

One of the primary rRNA binding proteins, it binds directly near the 3'-end of the 23S rRNA, where it nucleates assembly of the 50S subunit. In Fervidobacterium nodosum (strain ATCC 35602 / DSM 5306 / Rt17-B1), this protein is Large ribosomal subunit protein uL3.